A 241-amino-acid chain; its full sequence is Oil body-associated protein 1B (241 aa).

A compositionally biased stretch (polar residues) spans 1–12 (MEKAVHSSTTSG). Residues 1-22 (MEKAVHSSTTSGPAVPGETTKT) form a disordered region.

Belongs to the OBAP family.

In Arabidopsis thaliana (Mouse-ear cress), this protein is Oil body-associated protein 1B.